The chain runs to 547 residues: CTP synthase (547 aa).

The segment at 1-265 (MARYIFITGG…DQAVLDAFDI (265 aa)) is amidoligase domain. Serine 13 is a binding site for CTP. Serine 13 contacts UTP. Residues 14–19 (SLGKGL) and aspartate 71 contribute to the ATP site. Aspartate 71 and glutamate 139 together coordinate Mg(2+). CTP contacts are provided by residues 146-148 (DIE), 186-191 (KTKPTQ), and lysine 222. UTP contacts are provided by residues 186–191 (KTKPTQ) and lysine 222. One can recognise a Glutamine amidotransferase type-1 domain in the interval 291–546 (KVAIVGKYTQ…IRAAKENSRL (256 aa)). Glycine 353 contacts L-glutamine. Residue cysteine 380 is the Nucleophile; for glutamine hydrolysis of the active site. L-glutamine is bound by residues 381–384 (LGMQ), glutamate 404, and arginine 474. Active-site residues include histidine 519 and glutamate 521.

The protein belongs to the CTP synthase family. As to quaternary structure, homotetramer.

The enzyme catalyses UTP + L-glutamine + ATP + H2O = CTP + L-glutamate + ADP + phosphate + 2 H(+). The catalysed reaction is L-glutamine + H2O = L-glutamate + NH4(+). It carries out the reaction UTP + NH4(+) + ATP = CTP + ADP + phosphate + 2 H(+). It functions in the pathway pyrimidine metabolism; CTP biosynthesis via de novo pathway; CTP from UDP: step 2/2. Its activity is regulated as follows. Allosterically activated by GTP, when glutamine is the substrate; GTP has no effect on the reaction when ammonia is the substrate. The allosteric effector GTP functions by stabilizing the protein conformation that binds the tetrahedral intermediate(s) formed during glutamine hydrolysis. Inhibited by the product CTP, via allosteric rather than competitive inhibition. Catalyzes the ATP-dependent amination of UTP to CTP with either L-glutamine or ammonia as the source of nitrogen. Regulates intracellular CTP levels through interactions with the four ribonucleotide triphosphates. This chain is CTP synthase, found in Roseobacter denitrificans (strain ATCC 33942 / OCh 114) (Erythrobacter sp. (strain OCh 114)).